Reading from the N-terminus, the 538-residue chain is Putative cysteine ligase BshC (538 aa).

Residues 460–484 (KINEQIELLERMLKRNVEKKHEVEL) are a coiled coil.

Belongs to the BshC family.

Involved in bacillithiol (BSH) biosynthesis. May catalyze the last step of the pathway, the addition of cysteine to glucosamine malate (GlcN-Mal) to generate BSH. In Bacillus anthracis (strain A0248), this protein is Putative cysteine ligase BshC.